Here is an 891-residue protein sequence, read N- to C-terminus: Alanine--tRNA ligase (891 aa).

4 residues coordinate Zn(2+): His564, His568, Cys677, and His681.

The protein belongs to the class-II aminoacyl-tRNA synthetase family. Zn(2+) serves as cofactor.

It is found in the cytoplasm. The catalysed reaction is tRNA(Ala) + L-alanine + ATP = L-alanyl-tRNA(Ala) + AMP + diphosphate. In terms of biological role, catalyzes the attachment of alanine to tRNA(Ala) in a two-step reaction: alanine is first activated by ATP to form Ala-AMP and then transferred to the acceptor end of tRNA(Ala). Also edits incorrectly charged Ser-tRNA(Ala) and Gly-tRNA(Ala) via its editing domain. This is Alanine--tRNA ligase from Bradyrhizobium sp. (strain ORS 278).